Consider the following 30-residue polypeptide: Photosystem I reaction center subunit XII (30 aa).

The chain crosses the membrane as a helical span at residues 7–29 (VYIALMAALLASVLAIRLGATLY).

The protein belongs to the PsaM family.

It is found in the plastid. The protein localises to the chloroplast thylakoid membrane. The protein is Photosystem I reaction center subunit XII of Thalassiosira pseudonana (Marine diatom).